We begin with the raw amino-acid sequence, 190 residues long: Peptidyl-tRNA hydrolase (190 aa).

Tyr14 contributes to the tRNA binding site. His19 (proton acceptor) is an active-site residue. Residues Tyr64, Asn66, and Asn112 each contribute to the tRNA site.

This sequence belongs to the PTH family. In terms of assembly, monomer.

Its subcellular location is the cytoplasm. It carries out the reaction an N-acyl-L-alpha-aminoacyl-tRNA + H2O = an N-acyl-L-amino acid + a tRNA + H(+). In terms of biological role, hydrolyzes ribosome-free peptidyl-tRNAs (with 1 or more amino acids incorporated), which drop off the ribosome during protein synthesis, or as a result of ribosome stalling. Catalyzes the release of premature peptidyl moieties from peptidyl-tRNA molecules trapped in stalled 50S ribosomal subunits, and thus maintains levels of free tRNAs and 50S ribosomes. In Chlorobium phaeobacteroides (strain DSM 266 / SMG 266 / 2430), this protein is Peptidyl-tRNA hydrolase.